The chain runs to 1544 residues: GATOR complex protein Iml1 (1544 aa).

2 disordered regions span residues 615-649 and 1037-1072; these read QAVP…CENG and RRHS…EKRP. Composition is skewed to polar residues over residues 623–639 and 1041–1057; these read QAGQ…NNNN and TSII…TNSP. A compositionally biased stretch (basic and acidic residues) spans 1058-1072; that stretch reads FRERVGSNRLPEKRP.

This sequence belongs to the IML1 family. Component of the GATOR complex consisting of mio, Nup44A/Seh1, Im11, Nplr3, Nplr2, Wdr24, Wdr59 and Sec13. Within the GATOR complex, probable component of the GATOR1 subcomplex which is likely composed of Iml1, Nplr2 and Nplr3.

Its function is as follows. An essential component of the GATOR subcomplex GATOR1 which functions as an inhibitor of the amino acid-sensing branch of the TORC1 signaling pathway. The two GATOR subcomplexes, GATOR1 and GATOR2, regulate the TORC1 pathway in order to mediate metabolic homeostasis, female gametogenesis and the response to amino acid limitation and complete starvation. The function of GATOR1 in negatively regulating the TORC1 pathway is essential for maintaining baseline levels of TORC1 activity under nutrient rich conditions, and for promoting survival during amino acid or complete starvation by inhibiting TORC1-dependent cell growth and promoting catabolic metabolism and autophagy. GATOR1 and GATOR2 act at different stages of oogenesis to regulate TORC1 in order to control meiotic entry and promote oocyte growth and development. After exactly four mitotic cyst divisions, the GATOR1 complex members (Iml1, Nprl2 and Nprl3) down-regulate TORC1 to slow cellular metabolism and promote the mitotic/meiotic transition. At later stages of oogenesis, the mio and Nup44A components of the GATOR2 complex inhibit GATOR1 and thus activate TORC1 to promote meiotic progression, and drive oocyte growth and development. The protein is GATOR complex protein Iml1 of Drosophila melanogaster (Fruit fly).